A 289-amino-acid polypeptide reads, in one-letter code: MNTAAKMRELLSTKKMVVAPGAHDAMTAKVIGRLGFDAVYMTGYGQSASHLGQPDVGLLTMTEMVARANAIVEAAGVPVIADADTGFGNAVNVMRTVREYEKAGVAVIQLEDQVMPKKCGHMVGREIVSKEEMVGKIKAAVDTRVNPDFMIMARTDARTTKGIDEALERGLAYKEAGADIIFIESPEGEEEMKRINETIPGYTLANMVEGGRTPLLKNAELEALGYNITIYPTASIYVATKAMVDLWTALKNDDTTAGVMDTMVTFSEFNDLMGLEKIREVEHNYATGR.

The protein belongs to the isocitrate lyase/PEP mutase superfamily. In terms of assembly, homotetramer. Mg(2+) serves as cofactor.

It carries out the reaction (2R,3S)-2,3-dimethylmalate = propanoate + pyruvate. Its pathway is cofactor degradation; nicotinate degradation; propanoate and pyruvate from 6-hydroxynicotinate: step 8/8. With respect to regulation, completely inhibited by propionic anhydride and by cystamine. Irreversibly inhibited by the mercapto reagents iodoacetate and iodoacetamide. Unaffected by hydroxylamine. Its function is as follows. Catalyzes the formation of proponate and pyruvate from (2R,3S)-2,3-dimethylmalate. Has no activity toward dimethylmaleate, malate, citramalate, isocitrate and citrate. This Eubacterium barkeri (Clostridium barkeri) protein is 2,3-dimethylmalate lyase.